The chain runs to 515 residues: Maturase K (515 aa).

The protein belongs to the intron maturase 2 family. MatK subfamily.

The protein resides in the plastid. It localises to the chloroplast. Functionally, usually encoded in the trnK tRNA gene intron. Probably assists in splicing its own and other chloroplast group II introns. The polypeptide is Maturase K (Picea engelmannii (Engelmann's spruce)).